We begin with the raw amino-acid sequence, 493 residues long: uncharacterized protein (493 aa).

The residue at position 328 (Ser328) is a Phosphoserine. Over residues 466–486 the composition is skewed to polar residues; the sequence is AESNSGRGQNSKTKTTSVNLS. The interval 466-493 is disordered; that stretch reads AESNSGRGQNSKTKTTSVNLSRNKRTRT.

This is an uncharacterized protein from Schizosaccharomyces pombe (strain 972 / ATCC 24843) (Fission yeast).